Here is a 494-residue protein sequence, read N- to C-terminus: Ribose import ATP-binding protein RbsA (494 aa).

ABC transporter domains follow at residues 2-239 (IDMR…VGRQ) and 251-493 (IGEE…TGGN). Residue 34-41 (GENGAGKS) participates in ATP binding.

Belongs to the ABC transporter superfamily. Ribose importer (TC 3.A.1.2.1) family. As to quaternary structure, the complex is composed of an ATP-binding protein (RbsA), two transmembrane proteins (RbsC) and a solute-binding protein (RbsB).

It localises to the cell membrane. The enzyme catalyses D-ribose(out) + ATP + H2O = D-ribose(in) + ADP + phosphate + H(+). Functionally, part of the ABC transporter complex RbsABC involved in ribose import. Responsible for energy coupling to the transport system. The chain is Ribose import ATP-binding protein RbsA from Geobacillus kaustophilus (strain HTA426).